Consider the following 117-residue polypeptide: Large ribosomal subunit protein bL20c (117 aa).

It belongs to the bacterial ribosomal protein bL20 family.

It localises to the plastid. The protein localises to the chloroplast. Functionally, binds directly to 23S ribosomal RNA and is necessary for the in vitro assembly process of the 50S ribosomal subunit. It is not involved in the protein synthesizing functions of that subunit. The polypeptide is Large ribosomal subunit protein bL20c (Populus alba (White poplar)).